A 78-amino-acid polypeptide reads, in one-letter code: Protein M6 (78 aa).

Belongs to the A9/FIL1 family. As to expression, tapetum of anthers.

Its subcellular location is the secreted. The chain is Protein M6 (M6) from Lilium henryi (Henry's lily).